A 132-amino-acid chain; its full sequence is MDVTRLLLATLLVFLCFFTAYSHPPPEEKLRDDRSLRSNSSVNLLDFPSVSIVALNKNSKQISRKEAEKKRSSKKEASMKKVARPRTPLSAPCVATRDSCKPPAPACCDPCASCQCRFFRSACSCRVLSLNC.

A signal peptide spans 1–22 (MDVTRLLLATLLVFLCFFTAYS). An N-linked (GlcNAc...) asparagine glycan is attached at Asn-39. Residues 61 to 87 (QISRKEAEKKRSSKKEASMKKVARPRT) are disordered. The span at 63 to 79 (SRKEAEKKRSSKKEASM) shows a compositional bias: basic and acidic residues. Intrachain disulfides connect Cys-93–Cys-108, Cys-100–Cys-114, Cys-107–Cys-125, Cys-111–Cys-132, and Cys-116–Cys-123. An Agouti domain is found at 93-132 (CVATRDSCKPPAPACCDPCASCQCRFFRSACSCRVLSLNC).

The protein resides in the secreted. In terms of biological role, involved in the regulation of melanogenesis. The binding of ASP to MC1R precludes alpha-MSH initiated signaling and thus blocks production of cAMP, leading to a down-regulation of eumelanogenesis (brown/black pigment) and thus increasing synthesis of pheomelanin (yellow/red pigment). This chain is Agouti-signaling protein (ASIP), found in Macaca maura (Moor macaque).